Consider the following 204-residue polypeptide: Crossover junction endodeoxyribonuclease RuvC (204 aa).

Residues Asp-7, Glu-68, and Asp-141 contribute to the active site. Mg(2+)-binding residues include Asp-7, Glu-68, and Asp-141. Residues 164–204 (QAVAAHRTSGASRTPGAAGTPGPSRTPGAPGTSRTLKGRTA) are disordered.

The protein belongs to the RuvC family. As to quaternary structure, homodimer which binds Holliday junction (HJ) DNA. The HJ becomes 2-fold symmetrical on binding to RuvC with unstacked arms; it has a different conformation from HJ DNA in complex with RuvA. In the full resolvosome a probable DNA-RuvA(4)-RuvB(12)-RuvC(2) complex forms which resolves the HJ. Mg(2+) serves as cofactor.

It is found in the cytoplasm. It carries out the reaction Endonucleolytic cleavage at a junction such as a reciprocal single-stranded crossover between two homologous DNA duplexes (Holliday junction).. Functionally, the RuvA-RuvB-RuvC complex processes Holliday junction (HJ) DNA during genetic recombination and DNA repair. Endonuclease that resolves HJ intermediates. Cleaves cruciform DNA by making single-stranded nicks across the HJ at symmetrical positions within the homologous arms, yielding a 5'-phosphate and a 3'-hydroxyl group; requires a central core of homology in the junction. The consensus cleavage sequence is 5'-(A/T)TT(C/G)-3'. Cleavage occurs on the 3'-side of the TT dinucleotide at the point of strand exchange. HJ branch migration catalyzed by RuvA-RuvB allows RuvC to scan DNA until it finds its consensus sequence, where it cleaves and resolves the cruciform DNA. The protein is Crossover junction endodeoxyribonuclease RuvC of Streptomyces griseus subsp. griseus (strain JCM 4626 / CBS 651.72 / NBRC 13350 / KCC S-0626 / ISP 5235).